The sequence spans 262 residues: tRNA 4-demethylwyosine(37)-methyltransferase Taw21 (262 aa).

S-adenosyl-L-methionine-binding positions include His108, Phe125, 148–149, and 175–176; these read DL and DA.

The protein belongs to the class I-like SAM-binding methyltransferase superfamily. TRM5/TYW2 family.

It is found in the cytoplasm. It carries out the reaction 4-demethylwyosine(37) in tRNA(Phe) + S-adenosyl-L-methionine = isowyosine(37) in tRNA(Phe) + S-adenosyl-L-homocysteine + H(+). Its function is as follows. Catalyzes the C7-methylation of 4-demethylwyosine (imG-14) at position 37 in tRNA(Phe). This Saccharolobus solfataricus (strain ATCC 35092 / DSM 1617 / JCM 11322 / P2) (Sulfolobus solfataricus) protein is tRNA 4-demethylwyosine(37)-methyltransferase Taw21.